A 202-amino-acid polypeptide reads, in one-letter code: Ig delta chain C region (202 aa).

The disordered stretch occupies residues 32-58 (KSKTFKLPETRNSQSSKKANPTPQAKN). Positions 41-56 (TRNSQSSKKANPTPQA) are enriched in polar residues. Residues 66 to 178 (PTATKNIVGA…TKLNASKSLE (113 aa)) form the Ig-like domain.

The protein is Ig delta chain C region of Rattus norvegicus (Rat).